The chain runs to 445 residues: Deoxyribodipyrimidine photo-lyase (445 aa).

Residues 20 to 148 (SYVVYWMQAS…QVESNVIVPV (129 aa)) enclose the Photolyase/cryptochrome alpha/beta domain. R239 is a DNA binding site.

Belongs to the DNA photolyase class-2 family. FAD serves as cofactor. It depends on coenzyme F420-(gamma-Glu)n as a cofactor.

The enzyme catalyses cyclobutadipyrimidine (in DNA) = 2 pyrimidine residues (in DNA).. Functionally, involved in repair of UV radiation-induced DNA damage. Catalyzes the light-dependent monomerization (300-600 nm) of cyclobutyl pyrimidine dimers (in cis-syn configuration), which are formed between adjacent bases on the same DNA strand upon exposure to ultraviolet radiation. The protein is Deoxyribodipyrimidine photo-lyase (phr) of Methanothermobacter thermautotrophicus (strain ATCC 29096 / DSM 1053 / JCM 10044 / NBRC 100330 / Delta H) (Methanobacterium thermoautotrophicum).